Consider the following 419-residue polypeptide: Metacaspase-1 (419 aa).

The interval 1–109 (MSGYPGYNNG…PPQGMHAFGQ (109 aa)) is disordered. Composition is skewed to pro residues over residues 18–37 (QYPP…PPPQ) and 45–61 (QPPP…PPPQ). Polar residues predominate over residues 83–95 (SVNSNAYTNGNQN). Active-site residues include histidine 210 and cysteine 266.

It belongs to the peptidase C14B family.

Its function is as follows. Involved in cell death (apoptosis). The chain is Metacaspase-1 (casA) from Botryotinia fuckeliana (strain B05.10) (Noble rot fungus).